The sequence spans 138 residues: Small ribosomal subunit protein uS11 (138 aa).

Polar residues predominate over residues 1–12 (MAKQSAKGSTTT). The disordered stretch occupies residues 1–37 (MAKQSAKGSTTTKRQRGKRREKKNVPRGQAHIQSTFN). The segment covering 13–22 (KRQRGKRREK) has biased composition (basic residues).

Belongs to the universal ribosomal protein uS11 family. Part of the 30S ribosomal subunit. Interacts with proteins S7 and S18. Binds to IF-3.

Located on the platform of the 30S subunit, it bridges several disparate RNA helices of the 16S rRNA. Forms part of the Shine-Dalgarno cleft in the 70S ribosome. The polypeptide is Small ribosomal subunit protein uS11 (Roseiflexus castenholzii (strain DSM 13941 / HLO8)).